Here is a 425-residue protein sequence, read N- to C-terminus: Putative nucleoside transporter YegT (425 aa).

The Periplasmic segment spans residues 1 to 8 (MKTTAKLS). A helical membrane pass occupies residues 9 to 29 (FMMFVEWFIWGAWFVPLWLWL). Topologically, residues 30–38 (SKSGFSAGE) are cytoplasmic. A helical membrane pass occupies residues 39 to 59 (IGWSYACTAIAAILSPILVGS). At 60 to 63 (ITDR) the chain is on the periplasmic side. A helical membrane pass occupies residues 64–84 (FFSAQKVLAVLMFAGALLMYF). Residues 85 to 90 (AAQQTT) are Cytoplasmic-facing. Residues 91–111 (FAGFFPLLLAYSLTYMPTIAL) form a helical membrane-spanning segment. The Periplasmic segment spans residues 112-131 (TNSIAFANVPDVERDFPRIR). The chain crosses the membrane as a helical span at residues 132-152 (VMGTIGWIASGLACGFLPQIL). The Cytoplasmic segment spans residues 153-161 (GYADISPTN). Residues 162–182 (IPLLITAGSSALLGVFAFFLP) form a helical membrane-spanning segment. At 183-210 (DTPPKSTGKMDIKVMLGLDALILLRDKN) the chain is on the periplasmic side. Residues 211-231 (FLVFFFCSFLFAMPLAFYYIF) traverse the membrane as a helical segment. At 232–244 (ANGYLTEVGMKNA) the chain is on the cytoplasmic side. The chain crosses the membrane as a helical span at residues 245–265 (TGWMTLGQFSEIFFMLALPFF). Residues 266-287 (TKRFGIKKVLLLGLVTAAIRYG) are Periplasmic-facing. A helical transmembrane segment spans residues 288–308 (FFIYGSADEYFTYALLFLGIL). Topologically, residues 309-339 (LHGVSYDFYYVTAYIYVDKKAPVHMRTAAQG) are cytoplasmic. A helical membrane pass occupies residues 340-360 (LITLCCQGFGSLLGYRLGGVM). Residues 361–379 (MEKMFAYQEPVNGLTFNWS) lie on the Periplasmic side of the membrane. Residues 380-400 (GMWTFGAVMIAIIAVLFMIFF) form a helical membrane-spanning segment. Topologically, residues 401–425 (RESDNEITAIKVDDRDIALTQGEVK) are cytoplasmic.

The protein belongs to the major facilitator superfamily. Nucleoside:H(+) symporter (NHS) (TC 2.A.1.10) family.

It localises to the cell inner membrane. Its function is as follows. Could be involved in nucleoside transport. The chain is Putative nucleoside transporter YegT (yegT) from Escherichia coli (strain K12).